The following is a 108-amino-acid chain: MIKTTLLFFATALCEIIGCFLPWLWLKRNASIWLLLPAGISLALFVWLLTLHPAASGRVYAAYGGVYVCTALMWLRVVDGVKLTLYDWTGPLIALCGMLIIVVGWGRT.

Topologically, residues 1 to 5 (MIKTT) are periplasmic. Residues 6 to 26 (LLFFATALCEIIGCFLPWLWL) form a helical membrane-spanning segment. The Cytoplasmic segment spans residues 27 to 30 (KRNA). The helical transmembrane segment at 31–51 (SIWLLLPAGISLALFVWLLTL) threads the bilayer. The Periplasmic segment spans residues 52 to 60 (HPAASGRVY). A helical membrane pass occupies residues 61–81 (AAYGGVYVCTALMWLRVVDGV). Topologically, residues 82–84 (KLT) are cytoplasmic. The chain crosses the membrane as a helical span at residues 85 to 105 (LYDWTGPLIALCGMLIIVVGW). The Periplasmic portion of the chain corresponds to 106 to 108 (GRT).

The protein belongs to the UPF0060 family.

It localises to the cell inner membrane. This Escherichia coli O157:H7 protein is UPF0060 membrane protein YnfA.